Consider the following 304-residue polypeptide: Non-specific ribonucleoside hydrolase RihC (304 aa).

The active site involves His233.

This sequence belongs to the IUNH family. RihC subfamily.

Functionally, hydrolyzes both purine and pyrimidine ribonucleosides with a broad-substrate specificity. The chain is Non-specific ribonucleoside hydrolase RihC from Klebsiella pneumoniae (strain 342).